Consider the following 64-residue polypeptide: MPKQKTHSGAKKRFKVTGSGKIMKQQAGMRHNLEVKSSKRKARLNQDQPLAKADMKVAKKLLGR.

Positions 22–44 (IMKQQAGMRHNLEVKSSKRKARL) are disordered.

The protein belongs to the bacterial ribosomal protein bL35 family.

The protein is Large ribosomal subunit protein bL35 of Clavibacter sepedonicus (Clavibacter michiganensis subsp. sepedonicus).